A 271-amino-acid chain; its full sequence is tRNA pseudouridine synthase A (271 aa).

Asp-51 acts as the Nucleophile in catalysis. Tyr-109 lines the substrate pocket.

The protein belongs to the tRNA pseudouridine synthase TruA family. Homodimer.

The catalysed reaction is uridine(38/39/40) in tRNA = pseudouridine(38/39/40) in tRNA. Its function is as follows. Formation of pseudouridine at positions 38, 39 and 40 in the anticodon stem and loop of transfer RNAs. This Methylococcus capsulatus (strain ATCC 33009 / NCIMB 11132 / Bath) protein is tRNA pseudouridine synthase A.